A 233-amino-acid polypeptide reads, in one-letter code: MDPQLMEVSQQFERFKAAFIIKDFDTCSSLLSQLKLFDHYLISLSLNALLLLTCALFFLCTRNRIPPSPQENLIMGLNLLRLLVQNRIAEFHTELGLLSSATLENPCIKHAVELEQSFMEGAYNRVLSARQTAPDETYVYFMDLLAKTIRDEIAGCSEKAYDHLSISEGCKMLLFSSDQQLLTYVNEEHPEWEVKDGLVVFQKTRETAPCKEIPSLQLINQTLSYTRELERIL.

Methionine 1 is modified (N-acetylmethionine). Residues 38-217 enclose the PCI domain; it reads DHYLISLSLN…APCKEIPSLQ (180 aa).

The protein belongs to the proteasome subunit S14 family. Component of the 19S regulatory particle (RP/PA700) lid subcomplex of the 26S proteasome. The 26S proteasome is composed of a core protease (CP), known as the 20S proteasome, capped at one or both ends by the 19S regulatory particle (RP/PA700). The RP/PA700 complex is composed of at least 17 different subunits in two subcomplexes, the base and the lid, which form the portions proximal and distal to the 20S proteolytic core, respectively. Interacts with UCH1 and UCH2.

Functionally, acts as a regulatory subunit of the 26S proteasome which is involved in the ATP-dependent degradation of ubiquitinated proteins. This Arabidopsis thaliana (Mouse-ear cress) protein is Putative 26S proteasome non-ATPase regulatory subunit 8 homolog B.